Here is a 318-residue protein sequence, read N- to C-terminus: Probable cell division protein WhiA (318 aa).

Residues 281 to 314 constitute a DNA-binding region (H-T-H motif); sequence SLKELGQMLVPPVGKSGVNHRLRKIEEISKKLKE.

Belongs to the WhiA family.

Involved in cell division and chromosome segregation. In Thermoanaerobacter sp. (strain X514), this protein is Probable cell division protein WhiA.